A 49-amino-acid chain; its full sequence is Large ribosomal subunit protein bL33 (49 aa).

This sequence belongs to the bacterial ribosomal protein bL33 family.

This Finegoldia magna (strain ATCC 29328 / DSM 20472 / WAL 2508) (Peptostreptococcus magnus) protein is Large ribosomal subunit protein bL33.